Reading from the N-terminus, the 47-residue chain is PhoP/PhoQ regulator MgrB (47 aa).

The chain crosses the membrane as a helical span at residues 6–26 (WVVLVVVVLACLLLWAQVFNM).

This sequence belongs to the MgrB family. In terms of assembly, may form homooligomers. Probably interacts with the periplasmic domain of PhoQ.

The protein resides in the cell inner membrane. In terms of biological role, phoP-regulated transcription is redox-sensitive, being activated when the periplasm becomes more reducing. MgrB acts between DsbA/DsbB and PhoP/PhoQ in this pathway. Represses PhoP/PhoQ signaling, possibly by binding to the periplasmic domain of PhoQ, altering its activity and that of downstream effector PhoP. This is PhoP/PhoQ regulator MgrB from Escherichia coli O157:H7.